The primary structure comprises 175 residues: Alkyl hydroperoxide reductase AhpD (175 aa).

Cys-131 (proton donor) is an active-site residue. Residues Cys-131 and Cys-134 are joined by a disulfide bond. Cys-134 (cysteine sulfenic acid (-SOH) intermediate) is an active-site residue.

The protein belongs to the AhpD family.

It carries out the reaction N(6)-[(R)-dihydrolipoyl]-L-lysyl-[lipoyl-carrier protein] + a hydroperoxide = N(6)-[(R)-lipoyl]-L-lysyl-[lipoyl-carrier protein] + an alcohol + H2O. In terms of biological role, antioxidant protein with alkyl hydroperoxidase activity. Required for the reduction of the AhpC active site cysteine residues and for the regeneration of the AhpC enzyme activity. This is Alkyl hydroperoxide reductase AhpD from Brucella abortus (strain 2308).